A 209-amino-acid polypeptide reads, in one-letter code: Large ribosomal subunit protein uL4 (209 aa).

The tract at residues 44–77 is disordered; it reads QRQGTHKSKERSEVSGSTRKLIRQKGGGGARRGD.

Belongs to the universal ribosomal protein uL4 family. In terms of assembly, part of the 50S ribosomal subunit.

Its function is as follows. One of the primary rRNA binding proteins, this protein initially binds near the 5'-end of the 23S rRNA. It is important during the early stages of 50S assembly. It makes multiple contacts with different domains of the 23S rRNA in the assembled 50S subunit and ribosome. Forms part of the polypeptide exit tunnel. The polypeptide is Large ribosomal subunit protein uL4 (Parabacteroides distasonis (strain ATCC 8503 / DSM 20701 / CIP 104284 / JCM 5825 / NCTC 11152)).